The following is a 123-amino-acid chain: MFEITGINVSGALKAVVMATGFENPLSSVNEIETKLSALLGSETTGEILFDLLCANGPEWNRFVTLEMKYGRIMLDTAKIIDEQDVPTHILSKLTFTLRNHPEYLEASVLSPDDVRQVLSMDF.

Can form a complex with cognate toxin RnlA. In terms of processing, probably degraded by CplXP and Lon proteases.

Its function is as follows. Antitoxin component of a type II toxin-antitoxin (TA) system. A labile antitoxin (half-life of 2.1 minutes) that inhibits the endonuclease activity of cognate toxin RnlA but not that of non-cognate toxin LsoA. In Escherichia coli (strain K12), this protein is Antitoxin RnlB (rnlB).